The following is a 689-amino-acid chain: Glycine--tRNA ligase beta subunit (689 aa).

Belongs to the class-II aminoacyl-tRNA synthetase family. In terms of assembly, tetramer of two alpha and two beta subunits.

It localises to the cytoplasm. It carries out the reaction tRNA(Gly) + glycine + ATP = glycyl-tRNA(Gly) + AMP + diphosphate. The sequence is that of Glycine--tRNA ligase beta subunit from Actinobacillus pleuropneumoniae serotype 3 (strain JL03).